The primary structure comprises 1537 residues: Leucine-rich repeat-containing protein 7 (1537 aa).

LRR repeat units follow at residues 23-44 (IISV…VFNF), 47-68 (TLEE…LFNC), 70-91 (ALRK…IASL), 93-114 (NLKE…IKCC), 116-137 (CLTI…FTQL), 139-161 (NLTQ…GRLV), 162-183 (KLRI…MHKL), 185-206 (QLER…LDQI), 208-229 (NLRE…IGKL), 231-253 (MLVY…SGCE), 254-275 (ALED…IGLL), 277-298 (KLTT…IGNL), 300-321 (LLEE…IGYL), 323-344 (SLRT…IGSC), 346-367 (NVTV…IGQM), 369-391 (KLRV…TKLK), and 392-413 (ELAA…QTEA). Serine 439, serine 441, and serine 443 each carry phosphoserine. Residues 663–676 (KKESTDESEVDKTH) show a composition bias toward basic and acidic residues. Disordered stretches follow at residues 663 to 709 (KKES…VGSL), 730 to 759 (FPQP…DRLP), 786 to 810 (AENA…RRPL), and 824 to 892 (EQST…SPGV). The span at 677–709 (CLNNSVSSGTYSDYSPSQASSGSSNTRVKVGSL) shows a compositional bias: polar residues. The span at 790–804 (NSNPLLSSKSRSTSS) shows a compositional bias: low complexity. Phosphothreonine is present on threonine 831. Phosphoserine is present on serine 850. A compositionally biased stretch (low complexity) spans 859-871 (PSKLETTPTTSPL). Threonine 865 carries the phosphothreonine modification. Phosphoserine is present on serine 869. Basic and acidic residues predominate over residues 872–882 (PERKEHIKEST). Residues serine 947, serine 949, and serine 1118 each carry the phosphoserine modification. The tract at residues 1136-1159 (ELPPTDRYGRPPYRGGLDRQSSVT) is disordered. Residue arginine 1149 is modified to Omega-N-methylarginine. Position 1233 is a phosphoserine (serine 1233). 2 disordered regions span residues 1234–1265 (DYNL…SCGK) and 1331–1360 (QKTP…YPLG). Residues 1243 to 1263 (KPSDNSDLKTRPTPVKGEESC) show a composition bias toward basic and acidic residues. Polar residues predominate over residues 1332-1354 (KTPSQQSNILDNGQEDVSPSGQW). Phosphoserine is present on residues serine 1335 and serine 1439. A PDZ domain is found at 1445–1535 (EQFCVRIEKN…TVDLVIQREL (91 aa)).

The protein belongs to the LAP (LRR and PDZ) protein family. Interacts with CNKSR2 and DLG4. Interacts with CTNND2/Catenin delta-2. Forms a complex with N-cadherin through CTNND2. Interacts with CAMK2A. As to expression, brain-specific. Isoform 3 is ubiquitously expressed.

The protein resides in the cytoplasm. The protein localises to the postsynaptic density. In terms of biological role, required for normal synaptic spine architecture and function. Necessary for DISC1 and GRM5 localization to postsynaptic density complexes and for both N-methyl D-aspartate receptor-dependent and metabotropic glutamate receptor-dependent long term depression. The chain is Leucine-rich repeat-containing protein 7 (LRRC7) from Homo sapiens (Human).